The chain runs to 196 residues: dTTP/UTP pyrophosphatase (196 aa).

The active-site Proton acceptor is Asp72.

This sequence belongs to the Maf family. YhdE subfamily. A divalent metal cation serves as cofactor.

Its subcellular location is the cytoplasm. It catalyses the reaction dTTP + H2O = dTMP + diphosphate + H(+). It carries out the reaction UTP + H2O = UMP + diphosphate + H(+). Functionally, nucleoside triphosphate pyrophosphatase that hydrolyzes dTTP and UTP. May have a dual role in cell division arrest and in preventing the incorporation of modified nucleotides into cellular nucleic acids. This Chlamydia trachomatis serovar L2 (strain ATCC VR-902B / DSM 19102 / 434/Bu) protein is dTTP/UTP pyrophosphatase.